We begin with the raw amino-acid sequence, 32 residues long: PRRRRSSSRPVRRRRARRVSRRRRRRGGRRRR.

The disordered stretch occupies residues 1–32 (PRRRRSSSRPVRRRRARRVSRRRRRRGGRRRR).

As to expression, testis.

The protein resides in the nucleus. It localises to the chromosome. In terms of biological role, protamines substitute for histones in the chromatin of sperm during the haploid phase of spermatogenesis. They compact sperm DNA into a highly condensed, stable and inactive complex. The sequence is that of Protamine-2 from Oncorhynchus mykiss (Rainbow trout).